The chain runs to 520 residues: Alkyl hydroperoxide reductase subunit F (520 aa).

Asp-213–Ile-228 is an FAD binding site. A disulfide bridge connects residues Cys-343 and Cys-346. Arg-355–Ala-369 contributes to the NAD(+) binding site. Position 476-486 (Thr-476–Asp-486) interacts with FAD.

This sequence belongs to the class-II pyridine nucleotide-disulfide oxidoreductase family. Homodimer. FAD is required as a cofactor.

Its function is as follows. Serves to protect the cell against DNA damage by alkyl hydroperoxides. It can use either NADH or NADPH as electron donor for direct reduction of redox dyes or of alkyl hydroperoxides when combined with the AhpC protein. This Pseudomonas putida (Arthrobacter siderocapsulatus) protein is Alkyl hydroperoxide reductase subunit F (ahpF).